Consider the following 643-residue polypeptide: 1-deoxy-D-xylulose-5-phosphate synthase (643 aa).

Residues H78 and 119-121 each bind thiamine diphosphate; that span reads AHS. Residue D150 participates in Mg(2+) binding. Residues 151 to 152, N179, Y288, and E370 contribute to the thiamine diphosphate site; that span reads GS. Residue N179 coordinates Mg(2+).

It belongs to the transketolase family. DXPS subfamily. As to quaternary structure, homodimer. It depends on Mg(2+) as a cofactor. Thiamine diphosphate is required as a cofactor.

The enzyme catalyses D-glyceraldehyde 3-phosphate + pyruvate + H(+) = 1-deoxy-D-xylulose 5-phosphate + CO2. It functions in the pathway metabolic intermediate biosynthesis; 1-deoxy-D-xylulose 5-phosphate biosynthesis; 1-deoxy-D-xylulose 5-phosphate from D-glyceraldehyde 3-phosphate and pyruvate: step 1/1. Its function is as follows. Catalyzes the acyloin condensation reaction between C atoms 2 and 3 of pyruvate and glyceraldehyde 3-phosphate to yield 1-deoxy-D-xylulose-5-phosphate (DXP). The chain is 1-deoxy-D-xylulose-5-phosphate synthase from Brucella suis (strain ATCC 23445 / NCTC 10510).